Consider the following 184-residue polypeptide: Isopentenyl-diphosphate Delta-isomerase (184 aa).

Positions 25 and 32 each coordinate Mn(2+). Residues 30 to 164 form the Nudix hydrolase domain; it reads PLHLAFSCWL…PWAFSPWMVL (135 aa). C67 is a catalytic residue. H69 provides a ligand contact to Mn(2+). E87 serves as a coordination point for Mg(2+). E114 and E116 together coordinate Mn(2+). E116 is an active-site residue.

It belongs to the IPP isomerase type 1 family. Homodimer. Mg(2+) is required as a cofactor. The cofactor is Mn(2+).

It localises to the cytoplasm. The catalysed reaction is isopentenyl diphosphate = dimethylallyl diphosphate. Its pathway is isoprenoid biosynthesis; dimethylallyl diphosphate biosynthesis; dimethylallyl diphosphate from isopentenyl diphosphate: step 1/1. Its function is as follows. Catalyzes the 1,3-allylic rearrangement of the homoallylic substrate isopentenyl (IPP) to its highly electrophilic allylic isomer, dimethylallyl diphosphate (DMAPP). In Klebsiella pneumoniae (strain 342), this protein is Isopentenyl-diphosphate Delta-isomerase.